A 269-amino-acid chain; its full sequence is MSVSRKRIDHCNDCANKNGSGWRIVNVKDVTYRKERCSDVFKHEPRCQCGCQDKHHDRHDPCVPDECSKTDKQLTIVSAVNPTSNLIIPEAGVLPVPVNNVILNGWTLTTPDLLNSFNPSTGIFTATESGDYEINLVLSFKSSAFLNATENLSNVPQVSIIDAATGLPLNEAIQGFPTTSSQVVVDVPVVPPIPVLVTVTSVLGVGQISLSIIISLSAGQQVEILVSSNGLSHIPSSFPVGPATFTFNTGTSLIVKKVRNIPKVIYSLC.

This is an uncharacterized protein from Acanthamoeba polyphaga (Amoeba).